A 178-amino-acid chain; its full sequence is Large ribosomal subunit protein bL25 (178 aa).

The protein belongs to the bacterial ribosomal protein bL25 family. CTC subfamily. As to quaternary structure, part of the 50S ribosomal subunit; part of the 5S rRNA/L5/L18/L25 subcomplex. Contacts the 5S rRNA. Binds to the 5S rRNA independently of L5 and L18.

In terms of biological role, this is one of the proteins that binds to the 5S RNA in the ribosome where it forms part of the central protuberance. This Campylobacter jejuni subsp. jejuni serotype O:6 (strain 81116 / NCTC 11828) protein is Large ribosomal subunit protein bL25.